A 171-amino-acid chain; its full sequence is GTP-dependent dephospho-CoA kinase (171 aa).

Residues D49, V51, D68, and E122 each coordinate GTP.

It belongs to the GTP-dependent DPCK family.

It catalyses the reaction 3'-dephospho-CoA + GTP = GDP + CoA + H(+). The protein operates within cofactor biosynthesis; coenzyme A biosynthesis. Catalyzes the GTP-dependent phosphorylation of the 3'-hydroxyl group of dephosphocoenzyme A to form coenzyme A (CoA). This is GTP-dependent dephospho-CoA kinase from Hyperthermus butylicus (strain DSM 5456 / JCM 9403 / PLM1-5).